A 266-amino-acid polypeptide reads, in one-letter code: 3-methyl-2-oxobutanoate hydroxymethyltransferase (266 aa).

Mg(2+) contacts are provided by aspartate 45 and aspartate 84. Residues aspartate 45–serine 46, aspartate 84, and lysine 112 contribute to the 3-methyl-2-oxobutanoate site. Glutamate 114 provides a ligand contact to Mg(2+). Glutamate 181 serves as the catalytic Proton acceptor.

The protein belongs to the PanB family. Homodecamer; pentamer of dimers. It depends on Mg(2+) as a cofactor.

It is found in the cytoplasm. It carries out the reaction 3-methyl-2-oxobutanoate + (6R)-5,10-methylene-5,6,7,8-tetrahydrofolate + H2O = 2-dehydropantoate + (6S)-5,6,7,8-tetrahydrofolate. The protein operates within cofactor biosynthesis; (R)-pantothenate biosynthesis; (R)-pantoate from 3-methyl-2-oxobutanoate: step 1/2. In terms of biological role, catalyzes the reversible reaction in which hydroxymethyl group from 5,10-methylenetetrahydrofolate is transferred onto alpha-ketoisovalerate to form ketopantoate. The polypeptide is 3-methyl-2-oxobutanoate hydroxymethyltransferase (Pseudomonas syringae pv. tomato (strain ATCC BAA-871 / DC3000)).